An 88-amino-acid polypeptide reads, in one-letter code: Putative membrane protein insertion efficiency factor (88 aa).

This sequence belongs to the UPF0161 family.

Its subcellular location is the cell inner membrane. Functionally, could be involved in insertion of integral membrane proteins into the membrane. The protein is Putative membrane protein insertion efficiency factor of Burkholderia vietnamiensis (strain G4 / LMG 22486) (Burkholderia cepacia (strain R1808)).